The chain runs to 2326 residues: Telomere-associated protein RIF1 (2326 aa).

Disordered regions lie at residues 381-410 (QGTP…SPAT), 1105-1965 (YTQS…CITP), and 1993-2050 (VENK…DDSL). The segment covering 382-396 (GTPSRVPSNPNSANP) has biased composition (polar residues). Composition is skewed to basic and acidic residues over residues 1112–1126 (SLEK…EDFK) and 1150–1182 (CKVD…RGDR). Over residues 1216–1225 (SAISCSSTSS) the composition is skewed to low complexity. 2 stretches are compositionally biased toward polar residues: residues 1233-1242 (QPASRRQSFI) and 1252-1270 (SRPF…SQSA). Positions 1290–1299 (KSGEESRKSS) are enriched in basic and acidic residues. 2 stretches are compositionally biased toward polar residues: residues 1318–1332 (MEQQ…VTNS) and 1341–1353 (SFVS…SPES). Residues 1376-1402 (PDIKKAEAVMAEIEKVRAFEMDSKENT) show a composition bias toward basic and acidic residues. Positions 1403-1412 (PPKTAVSSEQ) are enriched in polar residues. Composition is skewed to basic and acidic residues over residues 1448 to 1480 (QDKE…DASQ), 1489 to 1511 (ASEH…DLGS), and 1519 to 1539 (GADE…KSDS). Residues 1564 to 1573 (SSQGLLSSIE) show a composition bias toward polar residues. Residues 1586–1595 (SLKKKSGKTK) show a composition bias toward basic residues. The segment covering 1596 to 1609 (NKSDSLEGKRKDVQ) has biased composition (basic and acidic residues). Polar residues-rich tracts occupy residues 1610-1640 (PESQ…SEVS) and 1671-1683 (RTSP…SVEQ). Residues 1697–1712 (RVSDEVLKGDENKCIE) are compositionally biased toward basic and acidic residues. Residues 1713–1745 (KQSSVEQHSSVQPENVQGANTSGSDLSSLQMQD) show a composition bias toward polar residues. Residues 1776–1785 (SKSEDPRELI) are compositionally biased toward basic and acidic residues. The segment covering 1795-1813 (AVSTAEVSGSSNLEESLSI) has biased composition (polar residues). Composition is skewed to basic and acidic residues over residues 1869-1884 (VEIK…DRAE), 1908-1925 (SEEK…HGEM), and 1932-1954 (DGSK…KEEA). A compositionally biased stretch (polar residues) spans 2009–2036 (SFTSVNGSPSGVQARCTWSPSASPSTSI).

Belongs to the RIF1 family. In terms of assembly, interacts with TP53BP1 (when phosphorylated by ATM).

It is found in the nucleus. The protein localises to the chromosome. The protein resides in the telomere. It localises to the cytoplasm. Its subcellular location is the cytoskeleton. It is found in the spindle. Its function is as follows. Key regulator of TP53BP1 that plays a key role in the repair of double-strand DNA breaks (DSBs) in response to DNA damage: acts by promoting non-homologous end joining (NHEJ)-mediated repair of DSBs. In response to DNA damage, interacts with ATM-phosphorylated TP53BP1, allowing recruitment to DNA DSBs. Once recruited to DSBs, RIF1 and TP53BP1 act by promoting NHEJ-mediated repair of DSBs. In the same time, RIF1 and TP53BP1 specifically counteract DSBs resection via homologous recombination (HR) during G1 phase. The protein is Telomere-associated protein RIF1 of Gallus gallus (Chicken).